The chain runs to 154 residues: Superoxide dismutase [Cu-Zn] (154 aa).

Cu cation is bound by residues H47, H49, and H64. A disulfide bridge connects residues C58 and C147. The Zn(2+) site is built by H64, H72, H81, and D84. H121 serves as a coordination point for Cu cation. Residues 124 to 137 (TDDLGKGENEESKK) show a composition bias toward basic and acidic residues. A disordered region spans residues 124 to 144 (TDDLGKGENEESKKTGNAGTR). R144 lines the substrate pocket.

The protein belongs to the Cu-Zn superoxide dismutase family. As to quaternary structure, homodimer. Requires Cu cation as cofactor. Zn(2+) serves as cofactor.

Its subcellular location is the cytoplasm. It carries out the reaction 2 superoxide + 2 H(+) = H2O2 + O2. Destroys radicals which are normally produced within the cells and which are toxic to biological systems. This Botryotinia fuckeliana (Noble rot fungus) protein is Superoxide dismutase [Cu-Zn] (sod1).